A 345-amino-acid chain; its full sequence is D-fructose 1,6-bisphosphatase class 2/sedoheptulose 1,7-bisphosphatase (345 aa).

Aspartate 33, glutamate 57, aspartate 97, and glutamate 100 together coordinate Mn(2+). Residues 100 to 102 (EGT), tyrosine 131, 176 to 178 (RPR), and 198 to 200 (DGD) each bind substrate. Glutamate 225 is a binding site for Mn(2+).

The protein belongs to the FBPase class 2 family. In terms of assembly, homotetramer. Mn(2+) serves as cofactor.

The catalysed reaction is beta-D-fructose 1,6-bisphosphate + H2O = beta-D-fructose 6-phosphate + phosphate. The enzyme catalyses D-sedoheptulose 1,7-bisphosphate + H2O = D-sedoheptulose 7-phosphate + phosphate. Its pathway is carbohydrate biosynthesis; Calvin cycle. In terms of biological role, catalyzes the hydrolysis of fructose 1,6-bisphosphate (Fru 1,6-P2) and sedoheptulose 1,7-bisphosphate (Sed 1,7-P2) to fructose 6-phosphate and sedoheptulose 7-phosphate, respectively. The chain is D-fructose 1,6-bisphosphatase class 2/sedoheptulose 1,7-bisphosphatase from Microcystis aeruginosa (strain NIES-843 / IAM M-2473).